A 164-amino-acid chain; its full sequence is ATP synthase subunit b 2 (164 aa).

Residues 4-24 traverse the membrane as a helical segment; sequence TFWAFVGLVLFLALLVYFEVP.

The protein belongs to the ATPase B chain family. As to quaternary structure, F-type ATPases have 2 components, F(1) - the catalytic core - and F(0) - the membrane proton channel. F(1) has five subunits: alpha(3), beta(3), gamma(1), delta(1), epsilon(1). F(0) has three main subunits: a(1), b(2) and c(10-14). The alpha and beta chains form an alternating ring which encloses part of the gamma chain. F(1) is attached to F(0) by a central stalk formed by the gamma and epsilon chains, while a peripheral stalk is formed by the delta and b chains.

Its subcellular location is the cell inner membrane. Its function is as follows. F(1)F(0) ATP synthase produces ATP from ADP in the presence of a proton or sodium gradient. F-type ATPases consist of two structural domains, F(1) containing the extramembraneous catalytic core and F(0) containing the membrane proton channel, linked together by a central stalk and a peripheral stalk. During catalysis, ATP synthesis in the catalytic domain of F(1) is coupled via a rotary mechanism of the central stalk subunits to proton translocation. Functionally, component of the F(0) channel, it forms part of the peripheral stalk, linking F(1) to F(0). The chain is ATP synthase subunit b 2 from Bartonella henselae (strain ATCC 49882 / DSM 28221 / CCUG 30454 / Houston 1) (Rochalimaea henselae).